A 189-amino-acid polypeptide reads, in one-letter code: Thioredoxin-like protein CITRX, chloroplastic (189 aa).

A chloroplast-targeting transit peptide spans 1-56 (MAMAAAASLLPASAAPTLPGRAFRPPRNSTPTASLSCDGGSRCRGVGLGVILGGCR). The Thioredoxin domain maps to 72–189 (GSGKYIAPDY…MIRNIIDNEL (118 aa)). Catalysis depends on nucleophile residues Cys-112 and Cys-115. Cysteines 112 and 115 form a disulfide.

The protein belongs to the thioredoxin family. Plant CITRX-type subfamily.

The protein localises to the plastid. It localises to the chloroplast. In terms of biological role, probable thiol-disulfide oxidoreductase that may play a role in proper chloroplast development. The chain is Thioredoxin-like protein CITRX, chloroplastic from Oryza sativa subsp. japonica (Rice).